Consider the following 301-residue polypeptide: Ribonuclease HIII (301 aa).

Residues 88–301 (WSVLGSDEVG…TQKARQLARQ (214 aa)) form the RNase H type-2 domain. The a divalent metal cation site is built by Asp94, Glu95, and Asp197.

Belongs to the RNase HII family. RnhC subfamily. It depends on Mn(2+) as a cofactor. Mg(2+) is required as a cofactor.

Its subcellular location is the cytoplasm. The catalysed reaction is Endonucleolytic cleavage to 5'-phosphomonoester.. Endonuclease that specifically degrades the RNA of RNA-DNA hybrids. This is Ribonuclease HIII from Limosilactobacillus fermentum (strain NBRC 3956 / LMG 18251) (Lactobacillus fermentum).